Consider the following 332-residue polypeptide: DGAT1/2-independent enzyme synthesizing storage lipids (332 aa).

Residues 1–10 (MIGSNESSTE) are Lumenal-facing. Asn-5 is a glycosylation site (N-linked (GlcNAc...) asparagine). The chain crosses the membrane as a helical span at residues 11-31 (GPIPTSYLSFLAYLLGEWTGV). Topologically, residues 32–45 (EHTEDYLSYGAYLS) are cytoplasmic. Residues 46–66 (WVLFPLAIVFILPVAIFFFCF) traverse the membrane as a helical segment. Over 67 to 332 (NTSLLLLHIY…ERFQTRQKED (266 aa)) the chain is Lumenal. His-132 is a catalytic residue. An N-linked (GlcNAc...) asparagine glycan is attached at Asn-289.

The protein belongs to the diacylglycerol acyltransferase family. Highly divergent.

Its subcellular location is the endoplasmic reticulum membrane. The catalysed reaction is a 1,2-diacylglycerol + a 1,2-diacyl-sn-glycero-3-phosphocholine = a triacylglycerol + a 1-acyl-sn-glycero-3-phosphocholine. It catalyses the reaction a 1-O-alkyl-2-acyl-sn-glycero-3-phosphocholine + a 1,2-diacylglycerol = a 1-O-alkyl-sn-glycero-3-phosphocholine + a triacylglycerol. The enzyme catalyses a 2-acylglycerol + an acyl-CoA = a 1,2-diacylglycerol + CoA. It carries out the reaction an acyl-CoA + a 1,2-diacyl-sn-glycerol = a triacyl-sn-glycerol + CoA. The catalysed reaction is 2-(9Z-octadecenoyl)-glycerol + (9Z)-octadecenoyl-CoA = 1,2-di-(9Z-octadecenoyl)-glycerol + CoA. It catalyses the reaction 1,2-di-(9Z-octadecenoyl)-sn-glycerol + (9Z)-octadecenoyl-CoA = 1,2,3-tri-(9Z-octadecenoyl)-glycerol + CoA. Catalytic subunit of the alternative triglyceride biosynthesis pathway, which mediates formation of triacylglycerol from diacylglycerol and membrane phospholipids. Synthesizes triacylglycerol at the expense of membrane phospholipids, such as phosphatidylcholine (PC) and its ether-linked form (ePC), thereby altering the composition of membranes. The alternative triglyceride biosynthesis pathway is probably required to provide the energy required for rapid growth when fuel sources are limiting. It maintains mitochondrial function during periods of extracellular lipid starvation. Can also use acyl-CoA as donor: acts as a acyl-CoA:monoacylglycerol acyltransferase (MGAT), but also shows acyl-CoA:diacylglycerol acyltransferase (DGAT) activity. The protein is DGAT1/2-independent enzyme synthesizing storage lipids (TMEM68) of Gallus gallus (Chicken).